Here is an 88-residue protein sequence, read N- to C-terminus: UPF0250 protein Sama_2593 (88 aa).

Belongs to the UPF0250 family.

The polypeptide is UPF0250 protein Sama_2593 (Shewanella amazonensis (strain ATCC BAA-1098 / SB2B)).